Consider the following 269-residue polypeptide: Eukaryotic translation initiation factor 3 subunit G-2 (269 aa).

Positions 189–267 (SAVRISNLSE…LILCVEWSKP (79 aa)) constitute an RRM domain.

Belongs to the eIF-3 subunit G family. In terms of assembly, component of the eukaryotic translation initiation factor 3 (eIF-3) complex. The eIF-3 complex interacts with pix.

It localises to the cytoplasm. Its function is as follows. RNA-binding component of the eukaryotic translation initiation factor 3 (eIF-3) complex, which is involved in protein synthesis of a specialized repertoire of mRNAs and, together with other initiation factors, stimulates binding of mRNA and methionyl-tRNAi to the 40S ribosome. The eIF-3 complex specifically targets and initiates translation of a subset of mRNAs involved in cell proliferation. This subunit can bind 18S rRNA. This chain is Eukaryotic translation initiation factor 3 subunit G-2, found in Drosophila ananassae (Fruit fly).